Here is a 425-residue protein sequence, read N- to C-terminus: Histidine--tRNA ligase (425 aa).

It belongs to the class-II aminoacyl-tRNA synthetase family. Homodimer.

It is found in the cytoplasm. The catalysed reaction is tRNA(His) + L-histidine + ATP = L-histidyl-tRNA(His) + AMP + diphosphate + H(+). The polypeptide is Histidine--tRNA ligase (Aeromonas hydrophila subsp. hydrophila (strain ATCC 7966 / DSM 30187 / BCRC 13018 / CCUG 14551 / JCM 1027 / KCTC 2358 / NCIMB 9240 / NCTC 8049)).